We begin with the raw amino-acid sequence, 897 residues long: Molybdenum import ATP-binding protein ModC 2 (897 aa).

The region spanning 6-236 is the ABC transporter domain; sequence RGRIDAAFRG…PALPLAYSRD (231 aa). 38–45 provides a ligand contact to ATP; it reads GPSGCGKT. Residues 295-365 form the Mop domain; that stretch reads ESSILNILPA…VKGVSLVRAS (71 aa). A disordered region spans residues 823–848; sequence LGDRSVLGPREPDAGAKGRKRQNDPE. A compositionally biased stretch (basic and acidic residues) spans 832-848; that stretch reads REPDAGAKGRKRQNDPE.

It belongs to the ABC transporter superfamily. Molybdate importer (TC 3.A.1.8) family. In terms of assembly, the complex is composed of two ATP-binding proteins (ModC), two transmembrane proteins (ModB) and a solute-binding protein (ModA).

The protein resides in the cell inner membrane. The enzyme catalyses molybdate(out) + ATP + H2O = molybdate(in) + ADP + phosphate + H(+). In terms of biological role, part of the ABC transporter complex ModABC involved in molybdenum import. Responsible for energy coupling to the transport system. The chain is Molybdenum import ATP-binding protein ModC 2 from Bradyrhizobium diazoefficiens (strain JCM 10833 / BCRC 13528 / IAM 13628 / NBRC 14792 / USDA 110).